A 644-amino-acid polypeptide reads, in one-letter code: Threonine--tRNA ligase (644 aa).

A TGS domain is found at methionine 1 to threonine 61. The segment at aspartate 242–proline 533 is catalytic. Zn(2+) is bound by residues cysteine 333, histidine 384, and histidine 510.

This sequence belongs to the class-II aminoacyl-tRNA synthetase family. In terms of assembly, homodimer. It depends on Zn(2+) as a cofactor.

It is found in the cytoplasm. It carries out the reaction tRNA(Thr) + L-threonine + ATP = L-threonyl-tRNA(Thr) + AMP + diphosphate + H(+). Functionally, catalyzes the attachment of threonine to tRNA(Thr) in a two-step reaction: L-threonine is first activated by ATP to form Thr-AMP and then transferred to the acceptor end of tRNA(Thr). Also edits incorrectly charged L-seryl-tRNA(Thr). This Psychrobacter cryohalolentis (strain ATCC BAA-1226 / DSM 17306 / VKM B-2378 / K5) protein is Threonine--tRNA ligase.